The primary structure comprises 175 residues: MMFTDWHEAAIGKTHNRMNFDCGDADLNQFLQRHARQNHEKGTTKTYVALDNSDVTRIHGFYSVSPASLIYAQVPGAISKGLGRYDVPVFRLGRLAVDKSMQGQGLGAQLLLSAGKRCIQAALQVGGVALLIDAKNKQVCDWYKGFGAVPLNDQPLSLLLSFKTLYAALSASGRL.

L95, V97, G103, G105, G107, A108, D133, Q138, D141, and W142 together coordinate acetyl-CoA. The active site involves Y143. 2 residues coordinate acetyl-CoA: G145 and F146.

It belongs to the acetyltransferase family. GNAT subfamily. Homodimer (in absence of antitoxin); has a condensed and elongated form. Forms a complex with cognate antitoxin TacA3. Forms a 4:2 antitoxin:toxin complex with cognate antitoxin TacA3. Forms a 4:4 antitoxin:toxin complex with promoter DNA, where 2 TacT3 dimers bridge 2 TacA3 dimers. Only TacA3 contacts promoter DNA in the octomeric form. TacT3 may contact DNA in the hexameric form.

The catalysed reaction is glycyl-tRNA(Gly) + acetyl-CoA = N-acetylglycyl-tRNA(Gly) + CoA + H(+). Functionally, toxic component of a type II toxin-antitoxin (TA) system. Acetylates tRNA and inhibits translation. Acetylates only Gly-tRNA on all 3 Gly-tRNA(Gly) isoacceptors in situ. In vitro acetylates mainly Ile/Leu and Gly. Overexpression during the lag phase of a tacA3-tacT3 deletion strain leads to a 150-fold increase in persister cells in the presence of cefotaxime and a non-growth state in the absence of antibiotic. Persister cell formation and the growth defect are neutralized by cognate antitoxin TacA3, but not by TacA1 or TacA2. Plays a role in persister cell formation. The TacA3-TacT3 complex both represses and derepresses expression of its own operon. The hexameric 4:2 TacA3-TacT3 complex binds promoter DNA and represses its transcription; both subunits are required. The octomeric 4:4 TacA3-TacT3 complex derepresses the operon. The shift from hexameric to octomeric complex probably alters DNA-binding, leading to dissociation from the operator DNA and derepression. The protein is tRNA-acetylating toxin 3 of Salmonella typhimurium (strain 14028s / SGSC 2262).